We begin with the raw amino-acid sequence, 282 residues long: Probable phosphatase C1620.13 (282 aa).

His-61 acts as the Tele-phosphohistidine intermediate in catalysis. Catalysis depends on Glu-135, which acts as the Proton donor/acceptor.

The protein belongs to the phosphoglycerate mutase family. BPG-dependent PGAM subfamily.

Its subcellular location is the nucleus. The protein is Probable phosphatase C1620.13 of Schizosaccharomyces pombe (strain 972 / ATCC 24843) (Fission yeast).